A 228-amino-acid polypeptide reads, in one-letter code: Cytochrome b-c1 complex subunit Rieske, mitochondrial (228 aa).

The transit peptide at 1–26 (MLAKQFISKSLASSLRRLLPVSSTAS) directs the protein to the mitochondrion. The Mitochondrial matrix portion of the chain corresponds to 27 to 63 (SLKGSMMTIPKFTSIRTYTDSPEMPDFSEYQTKSTGD). The chain crosses the membrane as a helical span at residues 64-93 (RSRVISYAMVGTMGALTAAGAQATVHDFLA). Residues 94–228 (SWSASADVLA…TFEGSKIIIG (135 aa)) are Mitochondrial intermembrane-facing. The Rieske domain occupies 139–227 (IQEANSVDIS…YTFEGSKIII (89 aa)). Cysteine 172, histidine 174, cysteine 191, and histidine 194 together coordinate [2Fe-2S] cluster. Cysteine 177 and cysteine 193 are oxidised to a cystine.

This sequence belongs to the Rieske iron-sulfur protein family. As to quaternary structure, component of the ubiquinol-cytochrome c oxidoreductase (cytochrome b-c1 complex, complex III, CIII), a multisubunit enzyme composed of 3 respiratory subunits cytochrome b, cytochrome c1 and Rieske protein, 2 core protein subunits, and additional low-molecular weight protein subunits. The complex exists as an obligatory dimer and forms supercomplexes (SCs) in the inner mitochondrial membrane with cytochrome c oxidase (complex IV, CIV). Requires [2Fe-2S] cluster as cofactor.

The protein localises to the mitochondrion inner membrane. The catalysed reaction is a quinol + 2 Fe(III)-[cytochrome c](out) = a quinone + 2 Fe(II)-[cytochrome c](out) + 2 H(+)(out). Its function is as follows. Component of the ubiquinol-cytochrome c oxidoreductase, a multisubunit transmembrane complex that is part of the mitochondrial electron transport chain which drives oxidative phosphorylation. The respiratory chain contains 3 multisubunit complexes succinate dehydrogenase (complex II, CII), ubiquinol-cytochrome c oxidoreductase (cytochrome b-c1 complex, complex III, CIII) and cytochrome c oxidase (complex IV, CIV), that cooperate to transfer electrons derived from NADH and succinate to molecular oxygen, creating an electrochemical gradient over the inner membrane that drives transmembrane transport and the ATP synthase. The cytochrome b-c1 complex catalyzes electron transfer from ubiquinol to cytochrome c, linking this redox reaction to translocation of protons across the mitochondrial inner membrane, with protons being carried across the membrane as hydrogens on the quinol. In the process called Q cycle, 2 protons are consumed from the matrix, 4 protons are released into the intermembrane space and 2 electrons are passed to cytochrome c. The Rieske protein is a catalytic core subunit containing a [2Fe-2S] iron-sulfur cluster. It cycles between 2 conformational states during catalysis to transfer electrons from the quinol bound in the Q(0) site in cytochrome b to cytochrome c1. The chain is Cytochrome b-c1 complex subunit Rieske, mitochondrial (rip1) from Schizosaccharomyces pombe (strain 972 / ATCC 24843) (Fission yeast).